The following is a 388-amino-acid chain: Probable fatty acid desaturase DES1 (388 aa).

A disordered region spans residues 1 to 33 (MATTPMTVVDHEAEEAVAKAREDDKSRQVDAFD). Basic and acidic residues predominate over residues 9–30 (VDHEAEEAVAKAREDDKSRQVD). Helical transmembrane passes span 62–82 (LWYVVRDVAAVVALGTAAAAM) and 85–105 (WAVWPVYWAVQGTMFWAFFVL). The Histidine box-1 signature appears at 107–111 (HDCGH). Residues 119-139 (TLNSVVGHLLHSFILIPYHGW) form a helical membrane-spanning segment. Residues 143 to 147 (HRTHH) carry the Histidine box-2 motif. The next 3 membrane-spanning stretches (helical) occupy residues 177-194 (IRFTAPYPLLLFPLYLFY), 226-246 (WCIMLASLLAMSCAFGPLQVL), and 248-268 (MYGLPYLVFVMWLDLVTYLHH). The Histidine box-3 motif lies at 310 to 314 (HVIHH).

Belongs to the fatty acid desaturase type 1 family. As to expression, highly expressed in root hair cells. Barely detected in panicle, shoot apex, stems and leaves.

It localises to the membrane. The protein operates within lipid metabolism; polyunsaturated fatty acid biosynthesis. In Sorghum bicolor (Sorghum), this protein is Probable fatty acid desaturase DES1.